A 253-amino-acid polypeptide reads, in one-letter code: Purine nucleoside phosphorylase DR_1966 (253 aa).

Zn(2+)-binding residues include His-72, Cys-106, and His-123.

Belongs to the purine nucleoside phosphorylase YfiH/LACC1 family. In terms of assembly, homodimer. Cu(2+) serves as cofactor. Zn(2+) is required as a cofactor.

The enzyme catalyses adenosine + phosphate = alpha-D-ribose 1-phosphate + adenine. The catalysed reaction is S-methyl-5'-thioadenosine + phosphate = 5-(methylsulfanyl)-alpha-D-ribose 1-phosphate + adenine. It catalyses the reaction inosine + phosphate = alpha-D-ribose 1-phosphate + hypoxanthine. It carries out the reaction adenosine + H2O + H(+) = inosine + NH4(+). Purine nucleoside enzyme that catalyzes the phosphorolysis of adenosine and inosine nucleosides, yielding D-ribose 1-phosphate and the respective free bases, adenine and hypoxanthine. Also catalyzes the phosphorolysis of S-methyl-5'-thioadenosine into adenine and S-methyl-5-thio-alpha-D-ribose 1-phosphate. Also has adenosine deaminase activity. The chain is Purine nucleoside phosphorylase DR_1966 from Deinococcus radiodurans (strain ATCC 13939 / DSM 20539 / JCM 16871 / CCUG 27074 / LMG 4051 / NBRC 15346 / NCIMB 9279 / VKM B-1422 / R1).